Here is a 71-residue protein sequence, read N- to C-terminus: UPF0434 protein APH_0052 (71 aa).

Residues 52-63 (RKLQPEEPKEGS) show a composition bias toward basic and acidic residues. Residues 52–71 (RKLQPEEPKEGSELQSSDNQ) are disordered.

The protein belongs to the UPF0434 family.

This is UPF0434 protein APH_0052 from Anaplasma phagocytophilum (strain HZ).